A 149-amino-acid polypeptide reads, in one-letter code: MADQLTEEQIAEFKEAGSLFDKDGDGTITTKELGTVMRSVGQNPTEAELQDMINEVDADGNGTIDFPEFLTMMARKMKDTDSEEEILEAFQGFDKDGNGFISAAELRHMMTNLGEKLTDEEVDEMIREADIDGDGQINYEEFVKMMMSK.

Residue alanine 2 is modified to N-acetylalanine. 4 consecutive EF-hand domains span residues 8 to 43 (EQIA…VGQN), 44 to 79 (PTEA…KMKD), 81 to 116 (DSEE…LGEK), and 117 to 149 (LTDE…MMSK). Aspartate 21, aspartate 23, aspartate 25, threonine 27, glutamate 32, aspartate 57, aspartate 59, asparagine 61, threonine 63, glutamate 68, aspartate 94, aspartate 96, asparagine 98, glutamate 105, aspartate 130, aspartate 132, aspartate 134, glutamine 136, and glutamate 141 together coordinate Ca(2+).

This sequence belongs to the calmodulin family.

In terms of biological role, calmodulin mediates the control of a large number of enzymes, ion channels and other proteins by Ca(2+). Among the enzymes to be stimulated by the calmodulin-Ca(2+) complex are a number of protein kinases and phosphatases. The polypeptide is Calmodulin (CMD1) (Achlya klebsiana).